We begin with the raw amino-acid sequence, 123 residues long: Protein Wnt-3 (123 aa).

Residue serine 1 is the site of O-palmitoleoyl serine; by PORCN attachment. Cysteine 89 and cysteine 104 are joined by a disulfide. Asparagine 90 carries N-linked (GlcNAc...) asparagine glycosylation.

This sequence belongs to the Wnt family. Post-translationally, palmitoleoylation is required for efficient binding to frizzled receptors. Depalmitoleoylation leads to Wnt signaling pathway inhibition.

It localises to the secreted. The protein localises to the extracellular space. It is found in the extracellular matrix. In terms of biological role, ligand for members of the frizzled family of seven transmembrane receptors. Functions in the canonical Wnt signaling pathway that results in activation of transcription factors of the TCF/LEF family. Required for normal embryonic development. This Eptatretus stoutii (Pacific hagfish) protein is Protein Wnt-3 (WNT-3).